The sequence spans 364 residues: Mitogen-activated protein kinase 11 (364 aa).

In terms of domain architecture, Protein kinase spans 24–308; sequence LQGLRPVGSG…AAEALAHAYF (285 aa). ATP contacts are provided by residues 30–38 and lysine 53; that span reads VGSGAYGSV. Residue glutamate 71 participates in nilotinib binding. Aspartate 168 functions as the Proton acceptor in the catalytic mechanism. Position 180 is a phosphothreonine; by MAP2K3, MAP2K4 and MAP2K6 (threonine 180). The TXY motif lies at 180 to 182; that stretch reads TGY. At tyrosine 182 the chain carries Phosphotyrosine; by MAP2K3, MAP2K4 and MAP2K6. The tract at residues 312–331 is disordered; it reads HDPDDEPEAEPYDESVEAKE. Residues 314 to 326 are compositionally biased toward acidic residues; it reads PDDEPEAEPYDES. Tyrosine 323 is subject to Phosphotyrosine; by ZAP70.

Belongs to the protein kinase superfamily. CMGC Ser/Thr protein kinase family. MAP kinase subfamily. In terms of assembly, interacts with HDAC3 and DUSP16. Mg(2+) is required as a cofactor. Dually phosphorylated on Thr-180 and Tyr-182 by MAP2K3/MKK3, MAP2K4/MKK4 and MAP2K6/MKK6, which activates the enzyme.

Its subcellular location is the cytoplasm. The protein resides in the nucleus. It catalyses the reaction L-seryl-[protein] + ATP = O-phospho-L-seryl-[protein] + ADP + H(+). The catalysed reaction is L-threonyl-[protein] + ATP = O-phospho-L-threonyl-[protein] + ADP + H(+). Activated by phosphorylation on threonine and tyrosine by MAP2K3/MKK3, MAP2K4/MKK4 and MAP2K6/MKK6. MAP2K3/MKK3 and MAP2K6/MKK6 are both essential for the activation of MAPK11 induced by environmental stress. HDAC3 interacts directly and selectively with MAPK11 to repress ATF2 transcriptional activity, and regulate TNF gene expression in LPS-stimulated cells. Inhibited by SB203580 and pyridinyl-imidazole related compounds. In terms of biological role, serine/threonine kinase which acts as an essential component of the MAP kinase signal transduction pathway. MAPK11 is one of the four p38 MAPKs which play an important role in the cascades of cellular responses evoked by extracellular stimuli such as pro-inflammatory cytokines or physical stress leading to direct activation of transcription factors. Accordingly, p38 MAPKs phosphorylate a broad range of proteins and it has been estimated that they may have approximately 200 to 300 substrates each. MAPK11 functions are mostly redundant with those of MAPK14. Some of the targets are downstream kinases which are activated through phosphorylation and further phosphorylate additional targets. RPS6KA5/MSK1 and RPS6KA4/MSK2 can directly phosphorylate and activate transcription factors such as CREB1, ATF1, the NF-kappa-B isoform RELA/NFKB3, STAT1 and STAT3, but can also phosphorylate histone H3 and the nucleosomal protein HMGN1. RPS6KA5/MSK1 and RPS6KA4/MSK2 play important roles in the rapid induction of immediate-early genes in response to stress or mitogenic stimuli, either by inducing chromatin remodeling or by recruiting the transcription machinery. On the other hand, two other kinase targets, MAPKAPK2/MK2 and MAPKAPK3/MK3, participate in the control of gene expression mostly at the post-transcriptional level, by phosphorylating ZFP36 (tristetraprolin) and ELAVL1, and by regulating EEF2K, which is important for the elongation of mRNA during translation. MKNK1/MNK1 and MKNK2/MNK2, two other kinases activated by p38 MAPKs, regulate protein synthesis by phosphorylating the initiation factor EIF4E2. In the cytoplasm, the p38 MAPK pathway is an important regulator of protein turnover. For example, CFLAR is an inhibitor of TNF-induced apoptosis whose proteasome-mediated degradation is regulated by p38 MAPK phosphorylation. Ectodomain shedding of transmembrane proteins is regulated by p38 MAPKs as well. In response to inflammatory stimuli, p38 MAPKs phosphorylate the membrane-associated metalloprotease ADAM17. Such phosphorylation is required for ADAM17-mediated ectodomain shedding of TGF-alpha family ligands, which results in the activation of EGFR signaling and cell proliferation. Additional examples of p38 MAPK substrates are the FGFR1. FGFR1 can be translocated from the extracellular space into the cytosol and nucleus of target cells, and regulates processes such as rRNA synthesis and cell growth. FGFR1 translocation requires p38 MAPK activation. In the nucleus, many transcription factors are phosphorylated and activated by p38 MAPKs in response to different stimuli. Classical examples include ATF1, ATF2, ATF6, ELK1, PTPRH, DDIT3, TP53/p53 and MEF2C and MEF2A. The p38 MAPKs are emerging as important modulators of gene expression by regulating chromatin modifiers and remodelers. The promoters of several genes involved in the inflammatory response, such as IL6, IL8 and IL12B, display a p38 MAPK-dependent enrichment of histone H3 phosphorylation on 'Ser-10' (H3S10ph) in LPS-stimulated myeloid cells. This phosphorylation enhances the accessibility of the cryptic NF-kappa-B-binding sites marking promoters for increased NF-kappa-B recruitment. Phosphorylates methyltransferase DOT1L on 'Ser-834', 'Thr-900', 'Ser-902', 'Thr-984', 'Ser-1001', 'Ser-1009' and 'Ser-1104'. The chain is Mitogen-activated protein kinase 11 (Mapk11) from Mus musculus (Mouse).